The primary structure comprises 207 residues: Small ribosomal subunit protein uS2 (207 aa).

Belongs to the universal ribosomal protein uS2 family.

In Pyrobaculum islandicum (strain DSM 4184 / JCM 9189 / GEO3), this protein is Small ribosomal subunit protein uS2.